Reading from the N-terminus, the 136-residue chain is Probable flagellum biosynthesis repressor protein FlbT 2 (136 aa).

Belongs to the FlbT family.

Its function is as follows. Has a post-transcriptional repressor function in flagellum biogenesis. Associates with the 5'-UTR of fljK mRNA and promotes its degradation. The polypeptide is Probable flagellum biosynthesis repressor protein FlbT 2 (Bradyrhizobium diazoefficiens (strain JCM 10833 / BCRC 13528 / IAM 13628 / NBRC 14792 / USDA 110)).